The following is a 600-amino-acid chain: Arginine--tRNA ligase (600 aa).

Residues 151 to 153 (SPN), His162, Tyr332, Asp336, and Gln360 each bind L-arginine. Residues 152-162 (PNIAKEMHIGH) carry the 'HIGH' region motif.

The protein belongs to the class-I aminoacyl-tRNA synthetase family.

It carries out the reaction tRNA(Arg) + L-arginine + ATP = L-arginyl-tRNA(Arg) + AMP + diphosphate. The chain is Arginine--tRNA ligase (RARS) from Acanthamoeba polyphaga mimivirus (APMV).